The sequence spans 297 residues: Ribosomal protein L11 methyltransferase (297 aa).

Residues Thr-150, Gly-171, Asp-193, and Asn-233 each coordinate S-adenosyl-L-methionine.

It belongs to the methyltransferase superfamily. PrmA family.

It localises to the cytoplasm. It catalyses the reaction L-lysyl-[protein] + 3 S-adenosyl-L-methionine = N(6),N(6),N(6)-trimethyl-L-lysyl-[protein] + 3 S-adenosyl-L-homocysteine + 3 H(+). Functionally, methylates ribosomal protein L11. This Laribacter hongkongensis (strain HLHK9) protein is Ribosomal protein L11 methyltransferase.